The sequence spans 888 residues: 3-hydroxy-3-methylglutaryl-coenzyme A reductase (888 aa).

At 1 to 9 the chain is on the cytoplasmic side; that stretch reads MLSRLFRMH. A helical membrane pass occupies residues 10-39; the sequence is GLFVASHPWEVIVGTVTLTICMMSMNMFTG. At 40–56 the chain is on the lumenal side; it reads NNKICGWNYECPKFEED. A helical membrane pass occupies residues 57 to 78; the sequence is VLSSDIIILTITRCIAILYIYF. In terms of domain architecture, SSD spans 61–218; the sequence is DIIILTITRC…MTFFPACVSL (158 aa). The short motif at 75–78 is the INSIG-binding motif element; sequence YIYF. Residues 79-89 are Cytoplasmic-facing; that stretch reads QFQNLRQLGSK. Lys89 is covalently cross-linked (Glycyl lysine isopeptide (Lys-Gly) (interchain with G-Cter in ubiquitin)). A helical transmembrane segment spans residues 90 to 114; the sequence is YILGIAGLFTIFSSFVFSTVVIHFL. The Lumenal portion of the chain corresponds to 115–123; sequence DKELTGLNE. The chain crosses the membrane as a helical span at residues 124 to 149; that stretch reads ALPFFLLLIDLSRASTLAKFALSSNS. Over 150 to 159 the chain is Cytoplasmic; that stretch reads QDEVRENIAR. The chain crosses the membrane as a helical span at residues 160–187; the sequence is GMAILGPTFTLDALVECLVIGVGTMSGV. The Lumenal portion of the chain corresponds to 188 to 191; it reads RQLE. The helical transmembrane segment at 192–220 threads the bilayer; it reads IMCCFGCMSVLANYFVFMTFFPACVSLVL. Residues 221–248 are Cytoplasmic-facing; it reads ELSRESREGRPIWLLSHFARVLEEEENK. A Glycyl lysine isopeptide (Lys-Gly) (interchain with G-Cter in ubiquitin) cross-link involves residue Lys248. Residues 249 to 275 traverse the membrane as a helical segment; that stretch reads PNPVTQRVKMIMSLGLVLVHAHSRWIA. Residues 276–314 lie on the Lumenal side of the membrane; the sequence is DPSPQNSTADTSKVSLGLDENVSKRIEPSVSLWQFYLSK. 2 N-linked (GlcNAc...) asparagine glycosylation sites follow: Asn281 and Asn296. The helical transmembrane segment at 315–339 threads the bilayer; that stretch reads MISMDIEQVITLSLALLLAVKYIFF. Residues 340-888 lie on the Cytoplasmic side of the membrane; it reads EQTETESTLS…LQGACTKKTA (549 aa). Active-site charge relay system residues include Glu559, Lys691, and Asp767. Residue His866 is the Proton donor of the active site. Ser872 is modified (phosphoserine; by AMPK).

Belongs to the HMG-CoA reductase family. Homotetramer. Homodimer. Interacts (via its SSD) with INSIG1; the interaction, accelerated by sterols, leads to the recruitment of HMGCR to AMFR/gp78 for its ubiquitination by the sterol-mediated ERAD pathway. Interacts with UBIAD1. In terms of processing, undergoes sterol-mediated ubiquitination and ER-associated degradation (ERAD). Accumulation of sterols in the endoplasmic reticulum (ER) membrane, triggers binding of the reductase to the ER membrane protein INSIG1 or INSIG2. The INSIG1 binding leads to the recruitment of the ubiquitin ligase, AMFR/gp78, RNF139 or RNF145, initiating ubiquitination of the reductase. The ubiquitinated reductase is then extracted from the ER membrane and delivered to cytosolic 26S proteosomes by a mechanism probably mediated by the ATPase Valosin-containing protein VCP/p97. The INSIG2-binding leads to the recruitment of the ubiquitin ligase RNF139, initiating ubiquitination of the reductase. Lys-248 is the main site of ubiquitination. Ubiquitination is enhanced by the presence of a geranylgeranylated protein. N-glycosylated. Deglycosylated by NGLY1 on release from the endoplasmic reticulum (ER) in a sterol-mediated manner. Post-translationally, phosphorylated. Phosphorylation at Ser-872 reduces the catalytic activity.

The protein resides in the endoplasmic reticulum membrane. The protein localises to the peroxisome membrane. It catalyses the reaction (R)-mevalonate + 2 NADP(+) + CoA = (3S)-3-hydroxy-3-methylglutaryl-CoA + 2 NADPH + 2 H(+). Its pathway is metabolic intermediate biosynthesis; (R)-mevalonate biosynthesis; (R)-mevalonate from acetyl-CoA: step 3/3. Regulated by a negative feedback mechanism through sterols and non-sterol metabolites derived from mevalonate. Phosphorylation at Ser-872 down-regulates the catalytic activity. Catalyzes the conversion of (3S)-hydroxy-3-methylglutaryl-CoA (HMG-CoA) to mevalonic acid, the rate-limiting step in the synthesis of cholesterol and other isoprenoids, thus plays a critical role in cellular cholesterol homeostasis. This is 3-hydroxy-3-methylglutaryl-coenzyme A reductase (HMGCR) from Pongo abelii (Sumatran orangutan).